A 196-amino-acid chain; its full sequence is dTTP/UTP pyrophosphatase (196 aa).

Aspartate 72 (proton acceptor) is an active-site residue.

The protein belongs to the Maf family. YhdE subfamily. Requires a divalent metal cation as cofactor.

It localises to the cytoplasm. The catalysed reaction is dTTP + H2O = dTMP + diphosphate + H(+). The enzyme catalyses UTP + H2O = UMP + diphosphate + H(+). Functionally, nucleoside triphosphate pyrophosphatase that hydrolyzes dTTP and UTP. May have a dual role in cell division arrest and in preventing the incorporation of modified nucleotides into cellular nucleic acids. The protein is dTTP/UTP pyrophosphatase of Chlamydia trachomatis serovar A (strain ATCC VR-571B / DSM 19440 / HAR-13).